We begin with the raw amino-acid sequence, 84 residues long: Large ribosomal subunit protein bL27 (84 aa).

The disordered stretch occupies residues 1-21 (MAHKKGGGSTKNGRDSNPKYL).

Belongs to the bacterial ribosomal protein bL27 family.

The polypeptide is Large ribosomal subunit protein bL27 (Pelodictyon phaeoclathratiforme (strain DSM 5477 / BU-1)).